An 82-amino-acid polypeptide reads, in one-letter code: Small ribosomal subunit protein uS17 (82 aa).

The protein belongs to the universal ribosomal protein uS17 family. In terms of assembly, part of the 30S ribosomal subunit.

In terms of biological role, one of the primary rRNA binding proteins, it binds specifically to the 5'-end of 16S ribosomal RNA. The protein is Small ribosomal subunit protein uS17 of Shewanella pealeana (strain ATCC 700345 / ANG-SQ1).